The following is a 329-amino-acid chain: Tagatose 1,6-diphosphate aldolase 2 (329 aa).

It belongs to the aldolase LacD family.

The enzyme catalyses D-tagatofuranose 1,6-bisphosphate = D-glyceraldehyde 3-phosphate + dihydroxyacetone phosphate. It participates in carbohydrate metabolism; D-tagatose 6-phosphate degradation; D-glyceraldehyde 3-phosphate and glycerone phosphate from D-tagatose 6-phosphate: step 2/2. This Streptococcus mutans serotype c (strain ATCC 700610 / UA159) protein is Tagatose 1,6-diphosphate aldolase 2 (lacD2).